The sequence spans 1296 residues: DNA-directed RNA polymerase subunit beta' (1296 aa).

The Zn(2+) site is built by Cys-60, Cys-62, Cys-75, and Cys-78. The interval 188–209 (GAKGDARRKVRESAEREMRQIR) is disordered. Mg(2+) is bound by residues Asp-535, Asp-537, and Asp-539. Zn(2+) is bound by residues Cys-877, Cys-954, Cys-961, and Cys-964.

It belongs to the RNA polymerase beta' chain family. As to quaternary structure, the RNAP catalytic core consists of 2 alpha, 1 beta, 1 beta' and 1 omega subunit. When a sigma factor is associated with the core the holoenzyme is formed, which can initiate transcription. Mg(2+) is required as a cofactor. Requires Zn(2+) as cofactor.

The catalysed reaction is RNA(n) + a ribonucleoside 5'-triphosphate = RNA(n+1) + diphosphate. Functionally, DNA-dependent RNA polymerase catalyzes the transcription of DNA into RNA using the four ribonucleoside triphosphates as substrates. This Parafrankia sp. (strain EAN1pec) protein is DNA-directed RNA polymerase subunit beta'.